The sequence spans 862 residues: Eukaryotic translation initiation factor 3 subunit C (862 aa).

The disordered stretch occupies residues 1-81 (MSSRFFYGGG…EEEEKVTVVK (81 aa)). Residues 17-54 (SSDEEELYSDREEEEKSEEEESSEEEDETSEEEESDEE) show a composition bias toward acidic residues. The span at 55 to 65 (TGAKKFLKDVA) shows a compositional bias: basic and acidic residues. Positions 66 to 75 (SDSEEEEEEE) are enriched in acidic residues. The PCI domain occupies 600–774 (FHMHINLELL…NAIVFRKGVE (175 aa)). The interval 813–862 (RDQGAGARGGRGSGRGGQARGGPRFPGGQQGRRPGGQQFGGGALGGAIKA) is disordered. Positions 818-862 (GARGGRGSGRGGQARGGPRFPGGQQGRRPGGQQFGGGALGGAIKA) are enriched in gly residues.

This sequence belongs to the eIF-3 subunit C family. In terms of assembly, component of the eukaryotic translation initiation factor 3 (eIF-3) complex.

The protein localises to the cytoplasm. Component of the eukaryotic translation initiation factor 3 (eIF-3) complex, which is involved in protein synthesis of a specialized repertoire of mRNAs and, together with other initiation factors, stimulates binding of mRNA and methionyl-tRNAi to the 40S ribosome. The eIF-3 complex specifically targets and initiates translation of a subset of mRNAs involved in cell proliferation. The chain is Eukaryotic translation initiation factor 3 subunit C (nip1) from Neosartorya fischeri (strain ATCC 1020 / DSM 3700 / CBS 544.65 / FGSC A1164 / JCM 1740 / NRRL 181 / WB 181) (Aspergillus fischerianus).